The following is a 1675-amino-acid chain: Clathrin heavy chain 1 (1675 aa).

Ala2 bears the N-acetylalanine mark. The segment at 2–479 (AQILPIRFQE…VDPTLALSVY (478 aa)) is globular terminal domain. WD40-like repeat regions lie at residues 24–67 (NIGF…RPIS), 68–107 (ADSA…MTDD), 108–149 (VTFW…SSLA), 150–195 (GCQI…QPIE), 196–257 (GHAA…PEAQ), 258–301 (NDFP…ISGE), and 302–330 (TIFV…VCVE). Ser67 is subject to Phosphoserine. At Thr105 the chain carries Phosphothreonine. A Phosphotyrosine modification is found at Tyr184. Thr394 carries the post-translational modification Phosphothreonine. The interval 449–465 (EKWLKEDKLECSEELGD) is binding site for the uncoating ATPase, involved in lattice disassembly. A flexible linker region spans residues 480–523 (LRANVPNKVIQCFAETGQVQKIVLYAKKVGYTPDWIFLLRNVMR). Residues 524 to 634 (ISPDQGQQFA…RALEHFTDLY (111 aa)) are distal segment. Residues 524 to 1675 (ISPDQGQQFA…QPQPGFGYSM (1152 aa)) are heavy chain arm. CHCR repeat units lie at residues 537–683 (VQDE…QICV), 686–828 (ASKY…SEDV), 833–972 (ILVV…PLID), 979–1124 (LSET…VKEA), 1128–1269 (YIKA…FRLA), 1274–1420 (LHIV…LLLN), and 1423–1566 (LMVL…RECF). Phosphotyrosine is present on Tyr634. The segment at 639 to 1675 (AVVHTHLLNP…QPQPGFGYSM (1037 aa)) is proximal segment. N6-succinyllysine is present on Lys737. N6-acetyllysine is present on Lys856. At Tyr899 the chain carries Phosphotyrosine. Ser1167 carries the post-translational modification Phosphoserine. Tyr1206 is modified (phosphotyrosine). Positions 1213-1522 (AAKLLYNNVS…YLFKGNNRWK (310 aa)) are involved in binding clathrin light chain. Ser1229 is modified (phosphoserine). Position 1441 is an N6-acetyllysine; alternate (Lys1441). Lys1441 is modified (N6-succinyllysine; alternate). Tyr1477 and Tyr1487 each carry phosphotyrosine. Ser1494 carries the phosphoserine modification. An N6-acetyllysine modification is found at Lys1501. The interval 1550-1675 (AEELLQWFLQ…QPQPGFGYSM (126 aa)) is trimerization.

Belongs to the clathrin heavy chain family. As to quaternary structure, clathrin triskelions, composed of 3 heavy chains and 3 light chains, are the basic subunits of the clathrin coat. In the presence of light chains, hub assembly is influenced by both the pH and the concentration of calcium. Interacts with HIP1. Interacts with DENND1A, DENND1B and DENND1C. Interacts with OCRL. Interacts with ERBB2. Interacts with FKBP6. Interacts with CKAP5 and TACC3 forming the TACC3/ch-TOG/clathrin complex located at spindle inter-microtubules bridges; the complex implicates clathrin triskelions; TACC3 and CLTC are proposed to form a composite microtubule interaction surface. Interacts with ATG16L1 (via N-terminus). Interacts with RFTN1; the interaction occurs in response to pathogens. Interacts with TMEM106B (via N-terminus). Interacts with DNAJC6; this interaction produces a local change in heavy-chain contacts, creating a detectable global distortion of the clathrin coat and leads to the recruitment of HSPA8.

Its subcellular location is the cytoplasmic vesicle membrane. It localises to the membrane. It is found in the coated pit. The protein resides in the melanosome. The protein localises to the cytoplasm. Its subcellular location is the cytoskeleton. It localises to the spindle. Functionally, clathrin is the major protein of the polyhedral coat of coated pits and vesicles. Two different adapter protein complexes link the clathrin lattice either to the plasma membrane or to the trans-Golgi network. Acts as a component of the TACC3/ch-TOG/clathrin complex proposed to contribute to stabilization of kinetochore fibers of the mitotic spindle by acting as inter-microtubule bridge. The TACC3/ch-TOG/clathrin complex is required for the maintenance of kinetochore fiber tension. Plays a role in early autophagosome formation. Interaction with DNAJC6 mediates the recruitment of HSPA8 to the clathrin lattice and creates local destabilization of the lattice promoting uncoating. This is Clathrin heavy chain 1 from Bos taurus (Bovine).